Consider the following 517-residue polypeptide: Serine O-succinyltransferase (517 aa).

The N-terminal 46 residues, 1–46, are a transit peptide targeting the mitochondrion; the sequence is MSPLNGVARSFPRPFQAVTRRPFRVVQPAIACPSNSRSFNHSRSLR. The segment covering 36-64 has biased composition (polar residues); that stretch reads SRSFNHSRSLRSTGSQSPAPSPRDSSNPA. A disordered region spans residues 36–66; sequence SRSFNHSRSLRSTGSQSPAPSPRDSSNPALS. An AB hydrolase-1 domain is found at 134-386; it reads NVILLHTGLS…LTQQLATKKQ (253 aa). The segment at 141-144 is important for substrate specificity; it reads GLSA. Ser238 acts as the Nucleophile in catalysis. Arg307 provides a ligand contact to substrate. Residues 413-436 are disordered; sequence QPYQEQPSASTSAEQSASASETGS. Residues 416 to 436 show a composition bias toward low complexity; it reads QEQPSASTSAEQSASASETGS. Active-site residues include Asp461 and His498. Residue Asp499 coordinates substrate.

The protein belongs to the AB hydrolase superfamily. MetX family.

The protein resides in the mitochondrion. It carries out the reaction succinyl-CoA + L-serine = O-succinyl-L-serine + CoA. It participates in amino-acid biosynthesis; L-cysteine biosynthesis; L-cysteine from L-serine: step 1/2. Functionally, transfers a succinyl group from succinyl-CoA to L-serine, forming succinyl-L-serine. Also has weak serine acetyl transferase activity and homoserine succinyl transferase activity. The polypeptide is Serine O-succinyltransferase (Emericella nidulans (strain FGSC A4 / ATCC 38163 / CBS 112.46 / NRRL 194 / M139) (Aspergillus nidulans)).